The chain runs to 321 residues: Citrate synthase (321 aa).

Catalysis depends on residues histidine 248 and aspartate 306.

The protein belongs to the citrate synthase family.

The enzyme catalyses oxaloacetate + acetyl-CoA + H2O = citrate + CoA + H(+). Its pathway is carbohydrate metabolism; tricarboxylic acid cycle; isocitrate from oxaloacetate: step 1/2. The sequence is that of Citrate synthase (gltA) from Bartonella elizabethae (Rochalimaea elizabethae).